The primary structure comprises 430 residues: Enolase (430 aa).

Glutamine 163 serves as a coordination point for (2R)-2-phosphoglycerate. The Proton donor role is filled by glutamate 205. Positions 242, 288, and 315 each coordinate Mg(2+). Positions 340, 369, 370, and 391 each coordinate (2R)-2-phosphoglycerate. The active-site Proton acceptor is the lysine 340.

It belongs to the enolase family. It depends on Mg(2+) as a cofactor.

The protein resides in the cytoplasm. It is found in the secreted. The protein localises to the cell surface. The catalysed reaction is (2R)-2-phosphoglycerate = phosphoenolpyruvate + H2O. The protein operates within carbohydrate degradation; glycolysis; pyruvate from D-glyceraldehyde 3-phosphate: step 4/5. Functionally, catalyzes the reversible conversion of 2-phosphoglycerate (2-PG) into phosphoenolpyruvate (PEP). It is essential for the degradation of carbohydrates via glycolysis. This is Enolase from Onion yellows phytoplasma (strain OY-M).